The following is a 246-amino-acid chain: Uridylate kinase (246 aa).

16–19 contacts ATP; that stretch reads KLGG. A UMP-binding site is contributed by Gly57. ATP contacts are provided by Gly58 and Arg62. UMP contacts are provided by residues Asp77 and 138 to 145; that span reads MGMPYFST. ATP-binding residues include Tyr171 and Asp174.

It belongs to the UMP kinase family. In terms of assembly, homohexamer.

It is found in the cytoplasm. The catalysed reaction is UMP + ATP = UDP + ADP. It participates in pyrimidine metabolism; CTP biosynthesis via de novo pathway; UDP from UMP (UMPK route): step 1/1. Inhibited by UTP. Functionally, catalyzes the reversible phosphorylation of UMP to UDP. In Corynebacterium jeikeium (strain K411), this protein is Uridylate kinase.